Consider the following 598-residue polypeptide: Serine/threonine-protein kinase cot-1 (598 aa).

Composition is skewed to polar residues over residues 1–16 (MDNT…TNDT), 24–33 (TYPTTPSTFP), and 99–126 (PRTS…TQTE). Disordered regions lie at residues 1-46 (MDNT…GGSQ), 80-148 (GSAG…NQKK), and 163-190 (RARE…RESI). Residues 214-518 (YQTIKIIGKG…AHEIKSHAFF (305 aa)) form the Protein kinase domain. ATP contacts are provided by residues 220-228 (IGKGAFGEV) and lysine 243. Aspartate 337 functions as the Proton acceptor in the catalytic mechanism. Residues 519–598 (RGVEFDSLRR…TFKRFDNNFR (80 aa)) enclose the AGC-kinase C-terminal domain.

The protein belongs to the protein kinase superfamily. STE Ser/Thr protein kinase family. COT1 subfamily.

The catalysed reaction is L-seryl-[protein] + ATP = O-phospho-L-seryl-[protein] + ADP + H(+). It carries out the reaction L-threonyl-[protein] + ATP = O-phospho-L-threonyl-[protein] + ADP + H(+). Protein kinase required for hyphal elongation. This chain is Serine/threonine-protein kinase cot-1 (cot-1), found in Neurospora crassa (strain ATCC 24698 / 74-OR23-1A / CBS 708.71 / DSM 1257 / FGSC 987).